We begin with the raw amino-acid sequence, 250 residues long: Hemocyanin, units C and D (250 aa).

His-1 is a Cu cation binding site. Positions 1-106 are unit C; it reads HGSTKWCPSP…RAWIEPVTSA (106 aa). A disulfide bond links Cys-7 and Cys-18. The 2'-(S-cysteinyl)-histidine (Cys-His) cross-link spans 19 to 21; it reads CHH. Cu cation is bound by residues His-21 and His-143. The tract at residues 107–250 is unit D; sequence VRIRKNLNDL…DAQDVIYNNH (144 aa). Cys-149 and Cys-160 are disulfide-bonded. The 2'-(S-cysteinyl)-histidine (Cys-His) cross-link spans 161-163; it reads CLH. His-172 is a binding site for Cu cation.

The protein belongs to the tyrosinase family. Hemocyanin subfamily. As to quaternary structure, decamers of large identical subunits (390 kDa), each containing 8 globular oxygen-binding functional units. Cu(2+) serves as cofactor.

Functionally, hemocyanins are copper-containing oxygen carriers occurring freely dissolved in the hemolymph of many mollusks and arthropods. The chain is Hemocyanin, units C and D from Sepia officinalis (Common cuttlefish).